We begin with the raw amino-acid sequence, 488 residues long: Poly(3-hydroxybutyrate) depolymerase (488 aa).

A signal peptide spans 1-27 (MVRRLWRRIAGWLAACVAILCAFPLHA). The Charge relay system role is filled by Ser166. The 83-residue stretch at 346 to 428 (APTGLAVTAT…AAVSATTKSA (83 aa)) folds into the Fibronectin type-III domain.

The protein belongs to the AB hydrolase superfamily. Lipase family.

It is found in the secreted. It carries out the reaction [(3R)-hydroxybutanoate](n) + H2O = [(3R)-hydroxybutanoate](n-2) + (3R)-hydroxybutanoate dimer + H(+). The enzyme catalyses [(3R)-hydroxybutanoate](n) + H2O = [(3R)-hydroxybutanoate](n-3) + (3R)-hydroxybutanoate trimer + H(+). It catalyses the reaction [(3R)-hydroxybutanoate](n) + H2O = [(3R)-hydroxybutanoate](n-1) + (R)-3-hydroxybutanoate + H(+). The catalysed reaction is [(3R)-hydroxybutanoate](n) + H2O = [(3R)-hydroxybutanoate](n-5) + (3R)-hydroxybutanoate pentamer + H(+). It carries out the reaction [(3R)-hydroxybutanoate](n) + H2O = [(3R)-hydroxybutanoate](n-4) + (3R)-hydroxybutanoate tetramer + H(+). This protein degrades water-insoluble and water-soluble PHB to monomeric D(-)-3-hydroxybutyrate. This is Poly(3-hydroxybutyrate) depolymerase from Ralstonia pickettii (Burkholderia pickettii).